Reading from the N-terminus, the 882-residue chain is Alanine--tRNA ligase (882 aa).

Residues histidine 576, histidine 580, cysteine 678, and histidine 682 each coordinate Zn(2+).

The protein belongs to the class-II aminoacyl-tRNA synthetase family. Zn(2+) serves as cofactor.

It localises to the cytoplasm. It catalyses the reaction tRNA(Ala) + L-alanine + ATP = L-alanyl-tRNA(Ala) + AMP + diphosphate. Functionally, catalyzes the attachment of alanine to tRNA(Ala) in a two-step reaction: alanine is first activated by ATP to form Ala-AMP and then transferred to the acceptor end of tRNA(Ala). Also edits incorrectly charged Ser-tRNA(Ala) and Gly-tRNA(Ala) via its editing domain. This chain is Alanine--tRNA ligase, found in Anaplasma marginale (strain St. Maries).